We begin with the raw amino-acid sequence, 388 residues long: Na(+)/H(+) antiporter NhaA (388 aa).

The next 12 helical transmembrane spans lie at 8–28, 33–53, 59–79, 95–115, 125–145, 154–174, 179–199, 217–237, 259–279, 287–307, 328–348, and 363–383; these read FLKL…IALI, PLQG…FAAL, LLLW…GLEV, LFPV…YLLF, GWAI…ALLS, VFLL…IALF, VSLV…WMNW, VCIL…GFLI, VAYL…LNGV, ILPL…IFLF, IFAV…ISGL, and LGIL…LRMV.

The protein belongs to the NhaA Na(+)/H(+) (TC 2.A.33) antiporter family.

Its subcellular location is the cell inner membrane. It carries out the reaction Na(+)(in) + 2 H(+)(out) = Na(+)(out) + 2 H(+)(in). In terms of biological role, na(+)/H(+) antiporter that extrudes sodium in exchange for external protons. The chain is Na(+)/H(+) antiporter NhaA from Photorhabdus laumondii subsp. laumondii (strain DSM 15139 / CIP 105565 / TT01) (Photorhabdus luminescens subsp. laumondii).